We begin with the raw amino-acid sequence, 128 residues long: MPTINQLVRKERKKVLEKSKSPALKNCPQRRGVCTRVYTTTPKKPNSALRKVAKVRLTSGFEVISYIGGEGHNLQEHSIVLVRGGRVKDLPGVKYHIVRGALDTAGVAKRTVSRSKYGAKRPKAGAAK.

Residue Asp89 is modified to 3-methylthioaspartic acid.

The protein belongs to the universal ribosomal protein uS12 family. As to quaternary structure, part of the 30S ribosomal subunit. Contacts proteins S8 and S17. May interact with IF1 in the 30S initiation complex.

In terms of biological role, with S4 and S5 plays an important role in translational accuracy. Interacts with and stabilizes bases of the 16S rRNA that are involved in tRNA selection in the A site and with the mRNA backbone. Located at the interface of the 30S and 50S subunits, it traverses the body of the 30S subunit contacting proteins on the other side and probably holding the rRNA structure together. The combined cluster of proteins S8, S12 and S17 appears to hold together the shoulder and platform of the 30S subunit. This is Small ribosomal subunit protein uS12 from Campylobacter jejuni subsp. doylei (strain ATCC BAA-1458 / RM4099 / 269.97).